The following is a 1004-amino-acid chain: Ephrin type-B receptor 2 (1004 aa).

An N-terminal signal peptide occupies residues 1 to 19; it reads MGPLWFCCLPLALLPLLAA. The Extracellular portion of the chain corresponds to 20–544; it reads VEETLMDSTT…QTSVQEKLPL (525 aa). The 183-residue stretch at 21–203 folds into the Eph LBD domain; sequence EETLMDSTTA…FYRKCPRVIQ (183 aa). 2 disulfide bridges follow: Cys63-Cys185 and Cys98-Cys108. N-linked (GlcNAc...) asparagine glycans are attached at residues Asn266, Asn337, Asn429, Asn478, and Asn483. Fibronectin type-III domains follow at residues 325–435 and 436–531; these read IPSA…TNQA and APSA…TMTE. The chain crosses the membrane as a helical span at residues 545–565; that stretch reads IIGSSAAGLVFLIAVVVIIIV. The Cytoplasmic segment spans residues 566–1004; sequence CNRRRGFERA…QMNQIQSVEV (439 aa). The Protein kinase domain occupies 639-902; that stretch reads VKIEQVIGAG…QIVNTLDKMI (264 aa). ATP is bound by residues 645–653 and Lys671; that span reads IGAGEFGEV. Catalysis depends on Asp764, which acts as the Proton acceptor. Residues 931 to 995 enclose the SAM domain; sequence TSFNTVDEWL…LNSIQVMRAQ (65 aa). Positions 1002–1004 match the PDZ-binding motif; it reads VEV.

This sequence belongs to the protein kinase superfamily. Tyr protein kinase family. Ephrin receptor subfamily. In terms of assembly, heterotetramer upon binding of the ligand. The heterotetramer is composed of an ephrin dimer and a receptor dimer. Oligomerization is probably required to induce biological responses. In terms of processing, ligand binding induces cleavage by matrix metalloproteinases (MMPs) such as MMP7/MMP9, producing an EphB2/N-terminal fragment (NTF) and a C-terminal long fragment (EphB2-LF). EphB2-LF is further cleaved by MMPs, producing EphB2/CTF1 which is further cleaved by the PS1/gamma-secretase producing EphB2/CTF2. In terms of tissue distribution, wide tissue distribution throughout development and sustained expression in adult brain. The longer form (CEK5+) is specifically expressed in the central nervous system.

The protein resides in the cell membrane. It is found in the cell projection. It localises to the axon. Its subcellular location is the dendrite. It catalyses the reaction L-tyrosyl-[protein] + ATP = O-phospho-L-tyrosyl-[protein] + ADP + H(+). Functionally, receptor tyrosine kinase which binds promiscuously transmembrane ephrin-B family ligands residing on adjacent cells, leading to contact-dependent bidirectional signaling into neighboring cells. The signaling pathway downstream of the receptor is referred to as forward signaling while the signaling pathway downstream of the ephrin ligand is referred to as reverse signaling. Functions in axon guidance during development. In addition to axon guidance, also regulates dendritic spines development and maturation and stimulates the formation of excitatory synapses. This Gallus gallus (Chicken) protein is Ephrin type-B receptor 2 (EPHB2).